We begin with the raw amino-acid sequence, 313 residues long: Pantothenate synthetase (313 aa).

43-50 (MGALHEGH) is a binding site for ATP. The Proton donor role is filled by H50. Q75 contacts (R)-pantoate. Residue Q75 coordinates beta-alanine. 161–164 (GEKD) contributes to the ATP binding site. Q167 is a (R)-pantoate binding site. ATP-binding positions include V190 and 198-201 (LSSR).

This sequence belongs to the pantothenate synthetase family. Homodimer.

Its subcellular location is the cytoplasm. The enzyme catalyses (R)-pantoate + beta-alanine + ATP = (R)-pantothenate + AMP + diphosphate + H(+). The protein operates within cofactor biosynthesis; (R)-pantothenate biosynthesis; (R)-pantothenate from (R)-pantoate and beta-alanine: step 1/1. Catalyzes the condensation of pantoate with beta-alanine in an ATP-dependent reaction via a pantoyl-adenylate intermediate. The polypeptide is Pantothenate synthetase (Mycobacterium sp. (strain JLS)).